The sequence spans 388 residues: P2X purinoceptor 4 (388 aa).

Over 1 to 33 (MTGCCTVLGAFLFEYDTPRIVLIRSRKVGLMNR) the chain is Cytoplasmic. The chain crosses the membrane as a helical span at residues 34 to 54 (TVQLLILAYVIGWVFVWEKGY). Residues 55 to 338 (QETDSVVSSV…KFDIIPTMIN (284 aa)) lie on the Extracellular side of the membrane. ATP contacts are provided by K67 and K69. CTP-binding residues include K67 and K69. 5 N-linked (GlcNAc...) asparagine glycosylation sites follow: N75, N110, N131, N153, and N184. Intrachain disulfides connect C116–C165, C126–C149, and C132–C159. 2 residues coordinate ATP: T186 and L188. T186 provides a ligand contact to CTP. N-linked (GlcNAc...) asparagine glycosylation is found at N199 and N208. Intrachain disulfides connect C217–C227 and C261–C270. The ATP site is built by N293, R295, and K313. CTP is bound by residues N293, R295, and K313. A helical transmembrane segment spans residues 339-359 (IGSGLALLGVATVLCDVIVLY). Topologically, residues 360 to 388 (CMKKRYYYREKKYKYVEDYEQGLGNQMEQ) are cytoplasmic.

It belongs to the P2X receptor family. In terms of assembly, functional P2RXs are organized as homomeric and heteromeric trimers. Forms heterotrimer with P2RX1. Interacts with P2RX7 (via C-terminus); this interaction is functional only in the presence of ATP. Forms heterotrimer with P2RX4; functional differences between homomeric P2RX4 and P2RX4/6 heterotrimer are minor. Interacts with AP1M2.

Its subcellular location is the cell membrane. The protein resides in the lysosome membrane. The enzyme catalyses K(+)(in) = K(+)(out). It catalyses the reaction Na(+)(in) = Na(+)(out). It carries out the reaction Ca(2+)(in) = Ca(2+)(out). Its activity is regulated as follows. Activated by ATP. pH-dependent and inhibited by acidic pH. In terms of biological role, ATP-gated nonselective transmembrane cation channel permeable to potassium, sodium and calcium. CTP, but not GTP or UTP, functions as a weak affinity agonist for P2RX4. Activated by extracellularly released ATP, it plays multiple role in immunity and central nervous system physiology. Could also function as an ATP-gated cation channel of lysosomal membranes. The sequence is that of P2X purinoceptor 4 (P2RX4) from Bos taurus (Bovine).